The sequence spans 486 residues: GTPase Obg (486 aa).

An Obg domain is found at 2-159 (SRFIDRVVLH…RELVLELKSV (158 aa)). Residues 160–340 (ADVGLVGFPS…LTFALAKLVA (181 aa)) enclose the OBG-type G domain. Residues 166 to 173 (GFPSAGKS), 191 to 195 (FTTLV), 212 to 215 (DVPG), 292 to 295 (NKAD), and 321 to 323 (SAV) each bind GTP. Residues S173 and T193 each contribute to the Mg(2+) site. One can recognise an OCT domain in the interval 358 to 438 (PVISNENSFS…IGNVSFDWEP (81 aa)). The interval 462–486 (RIGATERKHASRIRRGLEGLDPEDQ) is disordered.

It belongs to the TRAFAC class OBG-HflX-like GTPase superfamily. OBG GTPase family. Monomer. Mg(2+) is required as a cofactor.

It is found in the cytoplasm. In terms of biological role, an essential GTPase which binds GTP, GDP and possibly (p)ppGpp with moderate affinity, with high nucleotide exchange rates and a fairly low GTP hydrolysis rate. Plays a role in control of the cell cycle, stress response, ribosome biogenesis and in those bacteria that undergo differentiation, in morphogenesis control. The polypeptide is GTPase Obg (Rhodococcus jostii (strain RHA1)).